The following is a 482-amino-acid chain: BTB/POZ domain and ankyrin repeat-containing protein NOOT1 (482 aa).

The region spanning 25 to 107 (SDVVFSVEGR…LYSGQVSIVP (83 aa)) is the BTB domain. A C2HC NPR-type zinc finger spans residues 113–127 (RPNCGDRGCWHTHCT). Cys-116, Cys-121, His-123, and Cys-126 together coordinate Zn(2+). 4 ANK repeats span residues 249 to 278 (QKIRRMRRALDSSDVELVKLMVMGEGLNLD), 279 to 308 (EALALPYAVENCSREVVKALLELGAADVNF), 313 to 342 (TGKTPLHIAAEMVSPDMVAVLLDHHADPNV), and 346 to 380 (DGVTPLDILRTLTSDFLFKGAVPGLTHIEPNKLRL). The interval 395–434 (EEGNNNNSNNNNNATASSATNMYPHHNMNEDHHHSHNNNN) is disordered. Positions 398-415 (NNNNSNNNNNATASSATN) are enriched in low complexity.

It belongs to the plant 'ANKYRIN-BTB/POZ' family. 'NOOT-BOP-COCH-like' (NBCL) subfamily. As to quaternary structure, homodimer. As to expression, expressed in the shoot apical meristem (SAM) at the base of the developing leaf where stipules are formed. Associated with functional and vestigial abscission zones (AZs), including pulvini.

It localises to the nucleus. Its subcellular location is the cytoplasm. The protein resides in the cell membrane. Its pathway is protein modification; protein ubiquitination. In terms of biological role, may act as a substrate-specific adapter of an E3 ubiquitin-protein ligase complex (CUL3-RBX1-BTB) which mediates the ubiquitination and subsequent proteasomal degradation of target proteins. Transcriptional co-regulator involved in the promotion of leaf and floral meristem fate and determinacy. Promotes normal stipule growth and development. Required for the abscission of senescent organs, probably by regulating the cell wall disorganization in abscission zones (AZs, e.g. pulvini at the base of leaves). Involved in the coordination of the symbiotic nodule developmental program. Promotes the formation of root nodules by interacting directly with APP1 to modulate the expression of the nuclear transcription factor Y subunit (NF-YA1), a key nodulin. Necessary for the robust maintenance of nodule identity throughout the nodule developmental program. Involved in the regulation of indeterminate nodule identity in association with NOOT2. This Medicago truncatula (Barrel medic) protein is BTB/POZ domain and ankyrin repeat-containing protein NOOT1.